The primary structure comprises 407 residues: GTPase Obg (407 aa).

An Obg domain is found at 1-159; the sequence is MKFVDEVSIR…RDLKMEMKVL (159 aa). The interval 127–150 is disordered; the sequence is NTRFKSSTNRAPRQTTPGKPGDQR. Residues 129–143 show a composition bias toward polar residues; it reads RFKSSTNRAPRQTTP. The region spanning 160–333 is the OBG-type G domain; the sequence is ADVGLLGLPN…LSHDLMRYLE (174 aa). GTP contacts are provided by residues 166-173, 191-195, 213-216, 283-286, and 314-316; these read GLPNAGKS, FTTLV, DIPG, NKAD, and SAI. Mg(2+)-binding residues include serine 173 and threonine 193. Residues 378 to 407 are disordered; it reads VKSVHDIGDDDDWDDFEDDEDGPEIIYVRD. Residues 385–400 show a composition bias toward acidic residues; it reads GDDDDWDDFEDDEDGP.

This sequence belongs to the TRAFAC class OBG-HflX-like GTPase superfamily. OBG GTPase family. Monomer. Mg(2+) is required as a cofactor.

The protein resides in the cytoplasm. In terms of biological role, an essential GTPase which binds GTP, GDP and possibly (p)ppGpp with moderate affinity, with high nucleotide exchange rates and a fairly low GTP hydrolysis rate. Plays a role in control of the cell cycle, stress response, ribosome biogenesis and in those bacteria that undergo differentiation, in morphogenesis control. The sequence is that of GTPase Obg from Pseudomonas entomophila (strain L48).